Reading from the N-terminus, the 335-residue chain is tRNA N6-adenosine threonylcarbamoyltransferase (335 aa).

Fe cation contacts are provided by H112 and H116. Substrate-binding positions include 134 to 138 (VVSGG), D167, G180, and N273. D301 provides a ligand contact to Fe cation.

It belongs to the KAE1 / TsaD family. Fe(2+) is required as a cofactor.

It localises to the cytoplasm. The enzyme catalyses L-threonylcarbamoyladenylate + adenosine(37) in tRNA = N(6)-L-threonylcarbamoyladenosine(37) in tRNA + AMP + H(+). In terms of biological role, required for the formation of a threonylcarbamoyl group on adenosine at position 37 (t(6)A37) in tRNAs that read codons beginning with adenine. Is involved in the transfer of the threonylcarbamoyl moiety of threonylcarbamoyl-AMP (TC-AMP) to the N6 group of A37, together with TsaE and TsaB. TsaD likely plays a direct catalytic role in this reaction. This is tRNA N6-adenosine threonylcarbamoyltransferase from Shouchella clausii (strain KSM-K16) (Alkalihalobacillus clausii).